The primary structure comprises 360 residues: Protein phosphatase 1L (360 aa).

The Extracellular segment spans residues Met-1–Thr-25. Residues Leu-26–Thr-42 traverse the membrane as a helical segment. The Cytoplasmic segment spans residues Asp-43–Gln-360. Residues Asn-92–Phe-351 form the PPM-type phosphatase domain. Asp-128, Gly-129, Asp-302, and Asp-342 together coordinate Mn(2+).

The protein belongs to the PP2C family. As to quaternary structure, interacts with MAP3K7/TAK1. Interacts with MAP3K5. The cofactor is Mg(2+). Requires Mn(2+) as cofactor. As to expression, ubiquitous. Highly expressed in heart, placenta, lung, liver, kidney and pancreas.

Its subcellular location is the membrane. It carries out the reaction O-phospho-L-seryl-[protein] + H2O = L-seryl-[protein] + phosphate. The catalysed reaction is O-phospho-L-threonyl-[protein] + H2O = L-threonyl-[protein] + phosphate. In terms of biological role, acts as a suppressor of the SAPK signaling pathways by associating with and dephosphorylating MAP3K7/TAK1 and MAP3K5, and by attenuating the association between MAP3K7/TAK1 and MAP2K4 or MAP2K6. This is Protein phosphatase 1L (PPM1L) from Homo sapiens (Human).